The following is a 125-amino-acid chain: UPF0738 protein GK0828 (125 aa).

This sequence belongs to the UPF0738 family.

The protein is UPF0738 protein GK0828 of Geobacillus kaustophilus (strain HTA426).